The primary structure comprises 284 residues: Bifunctional protein FolD (284 aa).

NADP(+) is bound by residues 164-166, threonine 189, and isoleucine 230; that span reads GRG.

Belongs to the tetrahydrofolate dehydrogenase/cyclohydrolase family. Homodimer.

The catalysed reaction is (6R)-5,10-methylene-5,6,7,8-tetrahydrofolate + NADP(+) = (6R)-5,10-methenyltetrahydrofolate + NADPH. The enzyme catalyses (6R)-5,10-methenyltetrahydrofolate + H2O = (6R)-10-formyltetrahydrofolate + H(+). The protein operates within one-carbon metabolism; tetrahydrofolate interconversion. Its function is as follows. Catalyzes the oxidation of 5,10-methylenetetrahydrofolate to 5,10-methenyltetrahydrofolate and then the hydrolysis of 5,10-methenyltetrahydrofolate to 10-formyltetrahydrofolate. This is Bifunctional protein FolD from Pelotomaculum thermopropionicum (strain DSM 13744 / JCM 10971 / SI).